Consider the following 119-residue polypeptide: Large ribosomal subunit protein bL19 (119 aa).

This sequence belongs to the bacterial ribosomal protein bL19 family.

Functionally, this protein is located at the 30S-50S ribosomal subunit interface and may play a role in the structure and function of the aminoacyl-tRNA binding site. The sequence is that of Large ribosomal subunit protein bL19 from Pseudarthrobacter chlorophenolicus (strain ATCC 700700 / DSM 12829 / CIP 107037 / JCM 12360 / KCTC 9906 / NCIMB 13794 / A6) (Arthrobacter chlorophenolicus).